We begin with the raw amino-acid sequence, 68 residues long: Large ribosomal subunit protein uL29 (68 aa).

This sequence belongs to the universal ribosomal protein uL29 family.

This chain is Large ribosomal subunit protein uL29, found in Limosilactobacillus fermentum (strain NBRC 3956 / LMG 18251) (Lactobacillus fermentum).